Here is a 164-residue protein sequence, read N- to C-terminus: 17.8 kDa heat shock protein (164 aa).

A sHSP domain is found at 20 to 154; sequence VVAGEARPPM…HAGNGKAAGD (135 aa). Residues 68–93 are disordered; that stretch reads GEHEDANNAAKAGKASGEEEEENDGV.

Belongs to the small heat shock protein (HSP20) family. May form oligomeric structures.

The protein resides in the cytoplasm. The chain is 17.8 kDa heat shock protein (HSP17.8) from Oryza sativa subsp. japonica (Rice).